Consider the following 231-residue polypeptide: S-norcoclaurine synthase 2 (231 aa).

107–109 contacts dopamine; sequence YKE. Residue lysine 121 is the Proton donor of the active site. Residue aspartate 140 coordinates (4-hydroxyphenyl)acetaldehyde. Residues 210-230 traverse the membrane as a helical segment; the sequence is LLLCLIICLVIAGGMFVAGVP.

This sequence belongs to the BetVI family. As to expression, expressed in roots, stems and leaves. Detected in flower buds and germinating seeds. Low expression in carpels. Restricted to sieve elements of the phloem adjacent or proximal to laticifers.

Its subcellular location is the endoplasmic reticulum membrane. The protein localises to the vacuole membrane. The enzyme catalyses (4-hydroxyphenyl)acetaldehyde + dopamine = (S)-norcoclaurine + H2O. The protein operates within alkaloid biosynthesis; (S)-reticuline biosynthesis. Its activity is regulated as follows. Activity doubles within 5 hours of elicitor treatment and continues to increase for at least 80 hours. Functionally, involved in the biosynthesis of (S)-coclaurine, the common precursor of all benzylisoquinoline alkaloids such as morphine, sanguinarine, codeine or papaverine. Condenses dopamine and 4-hydroxyphenylacetaldehyde. The chain is S-norcoclaurine synthase 2 from Papaver somniferum (Opium poppy).